Here is a 222-residue protein sequence, read N- to C-terminus: Thiamine-phosphate synthase (222 aa).

4-amino-2-methyl-5-(diphosphooxymethyl)pyrimidine contacts are provided by residues 40-44 and Asn81; that span reads QLRDK. Mg(2+)-binding residues include Asp82 and Asp101. 4-amino-2-methyl-5-(diphosphooxymethyl)pyrimidine is bound at residue Ser120. 146 to 148 contributes to the 2-[(2R,5Z)-2-carboxy-4-methylthiazol-5(2H)-ylidene]ethyl phosphate binding site; sequence TPT. Lys149 is a 4-amino-2-methyl-5-(diphosphooxymethyl)pyrimidine binding site. Gly178 lines the 2-[(2R,5Z)-2-carboxy-4-methylthiazol-5(2H)-ylidene]ethyl phosphate pocket.

Belongs to the thiamine-phosphate synthase family. Requires Mg(2+) as cofactor.

It catalyses the reaction 2-[(2R,5Z)-2-carboxy-4-methylthiazol-5(2H)-ylidene]ethyl phosphate + 4-amino-2-methyl-5-(diphosphooxymethyl)pyrimidine + 2 H(+) = thiamine phosphate + CO2 + diphosphate. The enzyme catalyses 2-(2-carboxy-4-methylthiazol-5-yl)ethyl phosphate + 4-amino-2-methyl-5-(diphosphooxymethyl)pyrimidine + 2 H(+) = thiamine phosphate + CO2 + diphosphate. It carries out the reaction 4-methyl-5-(2-phosphooxyethyl)-thiazole + 4-amino-2-methyl-5-(diphosphooxymethyl)pyrimidine + H(+) = thiamine phosphate + diphosphate. Its pathway is cofactor biosynthesis; thiamine diphosphate biosynthesis; thiamine phosphate from 4-amino-2-methyl-5-diphosphomethylpyrimidine and 4-methyl-5-(2-phosphoethyl)-thiazole: step 1/1. Its function is as follows. Condenses 4-methyl-5-(beta-hydroxyethyl)thiazole monophosphate (THZ-P) and 2-methyl-4-amino-5-hydroxymethyl pyrimidine pyrophosphate (HMP-PP) to form thiamine monophosphate (TMP). The chain is Thiamine-phosphate synthase from Mycobacterium tuberculosis (strain ATCC 25177 / H37Ra).